Consider the following 161-residue polypeptide: Endoribonuclease YbeY (161 aa).

Zn(2+) is bound by residues H121, H125, and H131.

Belongs to the endoribonuclease YbeY family. Zn(2+) serves as cofactor.

The protein resides in the cytoplasm. In terms of biological role, single strand-specific metallo-endoribonuclease involved in late-stage 70S ribosome quality control and in maturation of the 3' terminus of the 16S rRNA. The protein is Endoribonuclease YbeY of Bordetella avium (strain 197N).